We begin with the raw amino-acid sequence, 477 residues long: MSPQTETKASVGFKAGVKDYKLTYYTPEYETKDTDILAAFRVTPQPGVPPEEAGAAVAAESSTGTWTTVWTDGLTSLDRYKGRCYHIEPVVGEDNQYIAYVAYPLDLFEEGSVTNMFTSIVGNVFGFKALRALRLEDLRIPPTYSKTFQGPPHGIQVERDKLNKYGRPLLGCTIKPKLGLSAKNYGRACYECLRGGLDFTKDDENVNSQPFMRWRDRFVFCAEAIYKSQAETGEIKGHYLNATAGTCEEMIKRAVFARELGVPIVMHDYLTGGFTANTSLAHYCRDNGLLLHIHRAMHAVIDRQKNHGMHFRVLAKALRMSGGDHIHAGTVVGKLEGEREMTLGFVDLLRDDFIEKDRARGIFFTQDWVSMPGVIPVASGGIHVWHMPALTEIFGDDSVLQFGGGTLGHPWGNAPGAAANRVALEACVQARNEGRDLAREGNEIIRSACKWSPELAAACEIWKAIKFEFEPVDKLDS.

Positions 1 to 2 are excised as a propeptide; it reads MS. At Pro3 the chain carries N-acetylproline. At Lys14 the chain carries N6,N6,N6-trimethyllysine. The substrate site is built by Asn123 and Thr173. Lys175 (proton acceptor) is an active-site residue. Substrate is bound at residue Lys177. Mg(2+)-binding residues include Lys201, Asp203, and Glu204. Lys201 is modified (N6-carboxylysine). Residue His294 is the Proton acceptor of the active site. Positions 295, 327, and 379 each coordinate substrate.

It belongs to the RuBisCO large chain family. Type I subfamily. In terms of assembly, heterohexadecamer of 8 large chains and 8 small chains; disulfide-linked. The disulfide link is formed within the large subunit homodimers. The cofactor is Mg(2+). In terms of processing, the disulfide bond which can form in the large chain dimeric partners within the hexadecamer appears to be associated with oxidative stress and protein turnover.

Its subcellular location is the plastid. It localises to the chloroplast. The catalysed reaction is 2 (2R)-3-phosphoglycerate + 2 H(+) = D-ribulose 1,5-bisphosphate + CO2 + H2O. It catalyses the reaction D-ribulose 1,5-bisphosphate + O2 = 2-phosphoglycolate + (2R)-3-phosphoglycerate + 2 H(+). RuBisCO catalyzes two reactions: the carboxylation of D-ribulose 1,5-bisphosphate, the primary event in carbon dioxide fixation, as well as the oxidative fragmentation of the pentose substrate in the photorespiration process. Both reactions occur simultaneously and in competition at the same active site. The polypeptide is Ribulose bisphosphate carboxylase large chain (Oryza nivara (Indian wild rice)).